The sequence spans 90 residues: Putative membrane protein insertion efficiency factor (90 aa).

This sequence belongs to the UPF0161 family.

Its subcellular location is the cell inner membrane. Functionally, could be involved in insertion of integral membrane proteins into the membrane. The protein is Putative membrane protein insertion efficiency factor of Bordetella bronchiseptica (strain ATCC BAA-588 / NCTC 13252 / RB50) (Alcaligenes bronchisepticus).